Here is a 343-residue protein sequence, read N- to C-terminus: Fc receptor-like protein 1 (343 aa).

An N-terminal signal peptide occupies residues Met1–Pro16. Ig-like C2-type domains are found at residues Ala17–His109 and Pro117–Ala200. At Ala17–Ser219 the chain is on the extracellular side. The N-linked (GlcNAc...) asparagine glycan is linked to Asn51. An intrachain disulfide couples Cys138 to Cys185. The N-linked (GlcNAc...) asparagine glycan is linked to Asn202. The helical transmembrane segment at Leu220 to Cys240 threads the bilayer. Topologically, residues Tyr241–Met343 are cytoplasmic. Residues Ser251–Glu278 are disordered. Positions Pro258–Pro269 are enriched in polar residues. 3 short sequence motifs (ITIM motif) span residues Ser266–Ser271, Pro279–Val284, and Glu291–Val296. Residue Tyr281 is modified to Phosphotyrosine. Tyr297 is modified (phosphotyrosine). 2 consecutive short sequence motifs (ITIM motif) follow at residues Gly325 to Pro330 and Met337 to Ala342.

Interacts with ABL1. Interacts with GRB2 and SOS1. Interacts with SHIP-1/INPP5D. In terms of processing, phosphorylated on C-terminal region upon BCR ligation leading to recruitment of ABL1. As to expression, widely expressed. Expressed in B-cells at the various stages of differentiation.

The protein resides in the cell membrane. Functionally, may function as an activating coreceptor in B-cells. May function in B-cells activation and differentiation. The sequence is that of Fc receptor-like protein 1 (Fcrl1) from Mus musculus (Mouse).